The following is an 81-amino-acid chain: Putative defensin-like protein 56 (81 aa).

An N-terminal signal peptide occupies residues 1 to 23; sequence MNITKAYVIFFLVVILTNSLSNS. Intrachain disulfides connect Cys46/Cys80, Cys50/Cys73, Cys59/Cys78, and Cys63/Cys79.

It belongs to the DEFL family.

Its subcellular location is the secreted. The sequence is that of Putative defensin-like protein 56 from Arabidopsis thaliana (Mouse-ear cress).